The chain runs to 150 residues: 6,7-dimethyl-8-ribityllumazine synthase (150 aa).

Residues phenylalanine 11, 43 to 45, and 67 to 69 each bind 5-amino-6-(D-ribitylamino)uracil; these read VYD and AVI. 72 to 73 lines the (2S)-2-hydroxy-3-oxobutyl phosphate pocket; sequence AT. The Proton donor role is filled by histidine 75. Leucine 100 lines the 5-amino-6-(D-ribitylamino)uracil pocket. A (2S)-2-hydroxy-3-oxobutyl phosphate-binding site is contributed by arginine 115.

Belongs to the DMRL synthase family.

The catalysed reaction is (2S)-2-hydroxy-3-oxobutyl phosphate + 5-amino-6-(D-ribitylamino)uracil = 6,7-dimethyl-8-(1-D-ribityl)lumazine + phosphate + 2 H2O + H(+). Its pathway is cofactor biosynthesis; riboflavin biosynthesis; riboflavin from 2-hydroxy-3-oxobutyl phosphate and 5-amino-6-(D-ribitylamino)uracil: step 1/2. Its function is as follows. Catalyzes the formation of 6,7-dimethyl-8-ribityllumazine by condensation of 5-amino-6-(D-ribitylamino)uracil with 3,4-dihydroxy-2-butanone 4-phosphate. This is the penultimate step in the biosynthesis of riboflavin. In Pyrobaculum neutrophilum (strain DSM 2338 / JCM 9278 / NBRC 100436 / V24Sta) (Thermoproteus neutrophilus), this protein is 6,7-dimethyl-8-ribityllumazine synthase.